A 165-amino-acid chain; its full sequence is Mediator of RNA polymerase II transcription subunit 10 (165 aa).

2 disordered regions span residues 54-81 (SLHT…DPAL) and 143-165 (LRGE…RERG). Residues 62-77 (TASTTAPNQYQSTNPN) show a composition bias toward polar residues.

This sequence belongs to the Mediator complex subunit 10 family. As to quaternary structure, component of the Mediator complex.

The protein localises to the nucleus. Component of the Mediator complex, a coactivator involved in the regulated transcription of nearly all RNA polymerase II-dependent genes. Mediator functions as a bridge to convey information from gene-specific regulatory proteins to the basal RNA polymerase II transcription machinery. Mediator is recruited to promoters by direct interactions with regulatory proteins and serves as a scaffold for the assembly of a functional preinitiation complex with RNA polymerase II and the general transcription factors. The chain is Mediator of RNA polymerase II transcription subunit 10 (nut2) from Emericella nidulans (strain FGSC A4 / ATCC 38163 / CBS 112.46 / NRRL 194 / M139) (Aspergillus nidulans).